Here is a 291-residue protein sequence, read N- to C-terminus: MFEGAMPALITPFTKDDRIDREGLQRNIEFVEEGGVAGIVPCGTTGESATLSALEHEEVIDIAVECSKVPVIAGTGSNNTGEALQFTKHAADAGVDGVLLISPYYNKPNPAGLLTHFKKIAEAVDVPMVMYNIPSRTGQDMPLEVIVELAKVENIVGIKEASGNIGKVSQILENTIDEDFVVISGEDNLTLPILSVGGQGVISVAANIVPDRMSRMVNAALAGDYETARKIHFEIAPLIRALFLETNPIPVKKAAELAGLASGNLRLPLAPLSETNTQKVADELRKLGVIE.

Pyruvate is bound at residue T45. The active-site Proton donor/acceptor is Y131. The active-site Schiff-base intermediate with substrate is K159. I202 is a pyruvate binding site.

Belongs to the DapA family. As to quaternary structure, homotetramer; dimer of dimers.

The protein resides in the cytoplasm. The enzyme catalyses L-aspartate 4-semialdehyde + pyruvate = (2S,4S)-4-hydroxy-2,3,4,5-tetrahydrodipicolinate + H2O + H(+). It functions in the pathway amino-acid biosynthesis; L-lysine biosynthesis via DAP pathway; (S)-tetrahydrodipicolinate from L-aspartate: step 3/4. Catalyzes the condensation of (S)-aspartate-beta-semialdehyde [(S)-ASA] and pyruvate to 4-hydroxy-tetrahydrodipicolinate (HTPA). In Methanosarcina barkeri (strain Fusaro / DSM 804), this protein is 4-hydroxy-tetrahydrodipicolinate synthase.